A 375-amino-acid chain; its full sequence is Chaperone protein DnaJ (375 aa).

The 66-residue stretch at 5–70 folds into the J domain; that stretch reads DYYEVLGVAR…NKRRAYDAHG (66 aa). The CR-type zinc finger occupies 131 to 208; sequence GIERRIEIPT…CHGAGRVEED (78 aa). Zn(2+) is bound by residues Cys-144, Cys-147, Cys-160, Cys-163, Cys-182, Cys-185, Cys-196, and Cys-199. CXXCXGXG motif repeat units follow at residues 144–151, 160–167, 182–189, and 196–203; these read CAPCHGSG, CGTCHGRG, CPHCDGRG, and CKTCHGAG.

Belongs to the DnaJ family. As to quaternary structure, homodimer. Zn(2+) is required as a cofactor.

The protein localises to the cytoplasm. Functionally, participates actively in the response to hyperosmotic and heat shock by preventing the aggregation of stress-denatured proteins and by disaggregating proteins, also in an autonomous, DnaK-independent fashion. Unfolded proteins bind initially to DnaJ; upon interaction with the DnaJ-bound protein, DnaK hydrolyzes its bound ATP, resulting in the formation of a stable complex. GrpE releases ADP from DnaK; ATP binding to DnaK triggers the release of the substrate protein, thus completing the reaction cycle. Several rounds of ATP-dependent interactions between DnaJ, DnaK and GrpE are required for fully efficient folding. Also involved, together with DnaK and GrpE, in the DNA replication of plasmids through activation of initiation proteins. This chain is Chaperone protein DnaJ, found in Xanthomonas axonopodis pv. citri (strain 306).